Consider the following 277-residue polypeptide: Shikimate dehydrogenase (NADP(+)) (277 aa).

Shikimate-binding positions include 18–20 (SKS) and Thr-65. The active-site Proton acceptor is the Lys-69. Position 81 (Glu-81) interacts with NADP(+). Positions 90 and 106 each coordinate shikimate. Residues 130–134 (GAGGA), 154–159 (NRTFSK), and Met-217 contribute to the NADP(+) site. Residue Tyr-219 coordinates shikimate. NADP(+) is bound at residue Gly-241.

It belongs to the shikimate dehydrogenase family. In terms of assembly, homodimer.

The catalysed reaction is shikimate + NADP(+) = 3-dehydroshikimate + NADPH + H(+). Its pathway is metabolic intermediate biosynthesis; chorismate biosynthesis; chorismate from D-erythrose 4-phosphate and phosphoenolpyruvate: step 4/7. Involved in the biosynthesis of the chorismate, which leads to the biosynthesis of aromatic amino acids. Catalyzes the reversible NADPH linked reduction of 3-dehydroshikimate (DHSA) to yield shikimate (SA). The polypeptide is Shikimate dehydrogenase (NADP(+)) (Vibrio campbellii (strain ATCC BAA-1116)).